The chain runs to 152 residues: UPF0266 membrane protein YobD (152 aa).

3 helical membrane passes run 6-26, 45-65, and 67-87; these read LVLILFIAALLAYALYDQFIM, VDSVIFVGLVAILIYNNVTSH, and AQMTTWLLSALALMGFYIFWI.

This sequence belongs to the UPF0266 family.

Its subcellular location is the cell inner membrane. The polypeptide is UPF0266 membrane protein YobD (Salmonella newport (strain SL254)).